Consider the following 257-residue polypeptide: 24 kDa outer membrane protein (257 aa).

The N-terminal stretch at 1 to 21 (MKNKSKLLACCLMALPISSFS) is a signal peptide.

The protein belongs to the MipA/OmpV family.

It localises to the cell outer membrane. The polypeptide is 24 kDa outer membrane protein (Pasteurella multocida (strain Pm70)).